We begin with the raw amino-acid sequence, 159 residues long: Cytochrome P450 monooxygenase aunB (159 aa).

Cysteine 134 provides a ligand contact to heme.

This sequence belongs to the cytochrome P450 family. Requires heme as cofactor.

The enzyme catalyses 2 fonsecin B + NADPH + O2 + H(+) = aurasperone B + NADP(+) + 2 H2O. The catalysed reaction is 2 rubrofusarin B + NADPH + O2 + H(+) = aurasperone A + NADP(+) + 2 H2O. It participates in secondary metabolite biosynthesis. In terms of biological role, cytochrome P450 monooxygenase; part of the gene cluster that mediates the biosynthesis of aurasperone B, a dimeric gamma-naphthopyrone. The first step in the biosynthesis of aurasperone B is the production of gamma-naphthopyrone precursor YWA1 by the non-reducing polyketide synthase albA, via condensation of one acetyl-CoA starter unit with 6 malonyl-CoA units. YWA1 is then methylated by aunE at position C-6 to yield foncesin which is further methylated at position C-8 by aunD to produce fonsecin B. A key enzyme in the biosynthetic pathway is the cytochrome P450 monooxygenase aunB which catalyzes the oxidative dimerization of fonsecin B to aurasperone B. AunB also catalyzes the oxidative dimerization of rubrofusarin B into aurasperone A. This is Cytochrome P450 monooxygenase aunB from Aspergillus niger (strain ATCC 1015 / CBS 113.46 / FGSC A1144 / LSHB Ac4 / NCTC 3858a / NRRL 328 / USDA 3528.7).